The primary structure comprises 248 residues: tRNA (guanine-N(7)-)-methyltransferase (248 aa).

S-adenosyl-L-methionine is bound by residues Gly-70, 93-94, 129-130, and Leu-149; these read EI and NA. Residue Asp-152 is part of the active site. S-adenosyl-L-methionine is bound at residue 227 to 229; it reads SEE.

The protein belongs to the class I-like SAM-binding methyltransferase superfamily. TrmB family.

Its subcellular location is the nucleus. The catalysed reaction is guanosine(46) in tRNA + S-adenosyl-L-methionine = N(7)-methylguanosine(46) in tRNA + S-adenosyl-L-homocysteine. The protein operates within tRNA modification; N(7)-methylguanine-tRNA biosynthesis. Catalyzes the formation of N(7)-methylguanine at position 46 (m7G46) in tRNA. The polypeptide is tRNA (guanine-N(7)-)-methyltransferase (Drosophila mojavensis (Fruit fly)).